The following is a 402-amino-acid chain: Protein DesVIII (402 aa).

This sequence belongs to the cytochrome P450 family. Forms a complex with DesVII.

It functions in the pathway antibiotic biosynthesis. Functionally, involved in the biosynthesis of the macrolide antibiotics methymycin, neomethymycin, narbomycin, and pikromycin. DesVIII assists the folding of the DesVII polypeptide. However, unlike chaperones, it remains bound to DesVII during catalysis, forming a tight DesVII/DesVIII complex. Although the formation of the DesVII/DesVIII complex is essential for the catalytic activity, DesVIII is unlikely to be involved in catalysis directly. The polypeptide is Protein DesVIII (Streptomyces venezuelae).